The sequence spans 297 residues: Large ribosomal subunit protein uL18 (297 aa).

The residue at position 2 (glycine 2) is an N-acetylglycine. N6-acetyllysine occurs at positions 5 and 48. Serine 185 is subject to Phosphoserine. Position 220 is an N6-acetyllysine; alternate (lysine 220). Lysine 220 is covalently cross-linked (Glycyl lysine isopeptide (Lys-Gly) (interchain with G-Cter in SUMO1); alternate). Residue lysine 220 forms a Glycyl lysine isopeptide (Lys-Gly) (interchain with G-Cter in SUMO2); alternate linkage. Threonine 232 is subject to Phosphothreonine. Positions 253–297 (YEKKPKKEVKKKRWNRPKMSLAQKKDRVAQKKASFLRAQERAAES) are disordered. Residues 258-268 (KKEVKKKRWNR) are compositionally biased toward basic residues. Serine 272 bears the Phosphoserine mark.

The protein belongs to the universal ribosomal protein uL18 family. As to quaternary structure, component of the large ribosomal subunit (LSU). Part of the 5S RNP complex, which is a LSU subcomplex composed of the 5S RNA, RPL5 and RPL11. Component of a hexameric 5S RNP precursor complex, composed of 5S RNA, RRS1, RPF2/BXDC1, RPL5, RPL11 and HEATR3; this complex acts as a precursor for ribosome assembly. Interacts with isoform 1 of NVL in an ATP-dependent manner. Interacts with RRP1B. Interacts with IPO5, IPO7 and KPNB1; these interactions may be involved in RPL5 nuclear import for the assembly of ribosomal subunits.

The protein resides in the cytoplasm. It is found in the nucleus. The protein localises to the nucleolus. Its function is as follows. Component of the ribosome, a large ribonucleoprotein complex responsible for the synthesis of proteins in the cell. The small ribosomal subunit (SSU) binds messenger RNAs (mRNAs) and translates the encoded message by selecting cognate aminoacyl-transfer RNA (tRNA) molecules. The large subunit (LSU) contains the ribosomal catalytic site termed the peptidyl transferase center (PTC), which catalyzes the formation of peptide bonds, thereby polymerizing the amino acids delivered by tRNAs into a polypeptide chain. The nascent polypeptides leave the ribosome through a tunnel in the LSU and interact with protein factors that function in enzymatic processing, targeting, and the membrane insertion of nascent chains at the exit of the ribosomal tunnel. As part of the 5S RNP/5S ribonucleoprotein particle it is an essential component of the LSU, required for its formation and the maturation of rRNAs. It also couples ribosome biogenesis to p53/TP53 activation. As part of the 5S RNP it accumulates in the nucleoplasm and inhibits MDM2, when ribosome biogenesis is perturbed, mediating the stabilization and the activation of TP53. This Homo sapiens (Human) protein is Large ribosomal subunit protein uL18 (RPL5).